Reading from the N-terminus, the 543-residue chain is Ipecoside beta-D-glucosidase IpeGLU1 (543 aa).

Residues Gln36, His140, 185-186 (NE), Tyr350, Glu422, Trp471, and Phe487 contribute to the a beta-D-glucoside site. The active-site Proton donor is the Glu186. The active-site Nucleophile is the Glu422.

Belongs to the glycosyl hydrolase 1 family. In terms of tissue distribution, expressed in roots.

The protein localises to the cytoplasm. The protein resides in the cytosol. The enzyme catalyses deacetylipecoside + H2O = deacetylipecoside aglycone + D-glucose. It carries out the reaction deacetylisoipecoside + H2O = deacetylisoipecoside aglycone + D-glucose. The catalysed reaction is 6-O-methyldeacetylipecoside + H2O = 6-O-methyldeacetylipecoside aglycone + D-glucose. It catalyses the reaction 6-O-methyldeacetylisoipecoside + H2O = 6-O-methyldeacetylisoipecoside aglycone + D-glucose. The enzyme catalyses ipecoside + H2O = ipecoside aglycone + D-glucose. It carries out the reaction 3alpha(S)-strictosidine + H2O = strictosidine aglycone + D-glucose. It functions in the pathway alkaloid biosynthesis. Inhibited by Cu(2+), Fe(2+) and Zn(2+). Beta-glucosidase involved in the biosynthesis of ipecac and benzylisoquinoline monoterpenoid-isoquinoline alkaloids natural products, starting by the condensation of dopamine and secologanin, and including emetine and cephaeline, drugs used both as anti-protozoal (e.g. treatment of ameobiasis) and as emetic agents. In response to pathogen and herbivore attack, triggers the release of toxic ipecoside aglycon to trigger defense responses. Catalyzes deglucosylation both on (1S)-diastereomer and (1R)-diastereomer substrates, including ipecoside, the main alkaloidal glucoside. Also active on N-deacetylisoipecoside, 6-O-methyl-N-deacetylisoipecoside, 6-O-methyl-N-deacetylipecoside and N-deacetylipecoside. The polypeptide is Ipecoside beta-D-glucosidase IpeGLU1 (Carapichea ipecacuanha (Ipecac)).